A 222-amino-acid polypeptide reads, in one-letter code: Eukaryotic translation initiation factor 3 subunit K (222 aa).

The 163-residue stretch at 46–208 folds into the PCI domain; it reads YDLEANLAVL…KIKTKNITEK (163 aa).

The protein belongs to the eIF-3 subunit K family. Component of the eukaryotic translation initiation factor 3 (eIF-3) complex. The eIF-3 complex interacts with pix.

The protein localises to the cytoplasm. Its function is as follows. Component of the eukaryotic translation initiation factor 3 (eIF-3) complex, which is involved in protein synthesis of a specialized repertoire of mRNAs and, together with other initiation factors, stimulates binding of mRNA and methionyl-tRNAi to the 40S ribosome. The eIF-3 complex specifically targets and initiates translation of a subset of mRNAs involved in cell proliferation. The sequence is that of Eukaryotic translation initiation factor 3 subunit K from Drosophila persimilis (Fruit fly).